An 876-amino-acid chain; its full sequence is Alanine--tRNA ligase (876 aa).

The Zn(2+) site is built by His-562, His-566, Cys-666, and His-670.

It belongs to the class-II aminoacyl-tRNA synthetase family. The cofactor is Zn(2+).

It localises to the cytoplasm. It catalyses the reaction tRNA(Ala) + L-alanine + ATP = L-alanyl-tRNA(Ala) + AMP + diphosphate. Catalyzes the attachment of alanine to tRNA(Ala) in a two-step reaction: alanine is first activated by ATP to form Ala-AMP and then transferred to the acceptor end of tRNA(Ala). Also edits incorrectly charged Ser-tRNA(Ala) and Gly-tRNA(Ala) via its editing domain. This chain is Alanine--tRNA ligase, found in Hahella chejuensis (strain KCTC 2396).